Reading from the N-terminus, the 177-residue chain is Large ribosomal subunit protein uL6 (177 aa).

This sequence belongs to the universal ribosomal protein uL6 family. Part of the 50S ribosomal subunit.

This protein binds to the 23S rRNA, and is important in its secondary structure. It is located near the subunit interface in the base of the L7/L12 stalk, and near the tRNA binding site of the peptidyltransferase center. This chain is Large ribosomal subunit protein uL6, found in Cereibacter sphaeroides (strain ATCC 17025 / ATH 2.4.3) (Rhodobacter sphaeroides).